A 206-amino-acid chain; its full sequence is Superoxide dismutase [Mn] (206 aa).

Mn(2+) is bound by residues His27, His82, Asp168, and His172.

This sequence belongs to the iron/manganese superoxide dismutase family. As to quaternary structure, homodimer. Requires Mn(2+) as cofactor.

It catalyses the reaction 2 superoxide + 2 H(+) = H2O2 + O2. Its function is as follows. Destroys superoxide anion radicals which are normally produced within the cells and which are toxic to biological systems. This is Superoxide dismutase [Mn] (sodA) from Escherichia coli (strain K12).